Here is a 275-residue protein sequence, read N- to C-terminus: Putative hydro-lyase SPO1111 (275 aa).

Belongs to the D-glutamate cyclase family.

The polypeptide is Putative hydro-lyase SPO1111 (Ruegeria pomeroyi (strain ATCC 700808 / DSM 15171 / DSS-3) (Silicibacter pomeroyi)).